The following is a 135-amino-acid chain: MSSIIRKVISTTKAPAAIGPYSQAVQVDRTIYISGQVGLDPSSGQLVPGGVVEEAKQALKNLGEILKAAGCDFNNVVKTTVLLADMNDFGTVNEIYKTYFQGSLPARAAYQVAALPRGSRVEIEAIAVQGPFIKA.

Position 2 is an N-acetylserine (S2). K13, K60, K67, and K134 each carry N6-succinyllysine.

It belongs to the RutC family. In terms of assembly, homotrimer. Interacts with YTHDF2. As to expression, expressed predominantly in liver and kidney. Lower levels in lung and brain.

It is found in the cytoplasm. The protein localises to the nucleus. It localises to the peroxisome. Its subcellular location is the mitochondrion. It carries out the reaction 2-iminobutanoate + H2O = 2-oxobutanoate + NH4(+). It catalyses the reaction 2-iminopropanoate + H2O = pyruvate + NH4(+). Catalyzes the hydrolytic deamination of enamine/imine intermediates that form during the course of normal metabolism. May facilitate the release of ammonia from these potentially toxic reactive metabolites, reducing their impact on cellular components. It may act on enamine/imine intermediates formed by several types of pyridoxal-5'-phosphate-dependent dehydratases including L-threonine dehydratase. Its function is as follows. Also promotes endoribonucleolytic cleavage of some transcripts by promoting recruitment of the ribonuclease P/MRP complex. Acts by bridging YTHDF2 and the ribonuclease P/MRP complex. RIDA/HRSP12 binds to N6-methyladenosine (m6A)-containing mRNAs containing a 5'-GGUUC-3' motif: cooperative binding of RIDA/HRSP12 and YTHDF2 to such transcripts lead to recruitment of the ribonuclease P/MRP complex and subsequent endoribonucleolytic cleavage. The polypeptide is 2-iminobutanoate/2-iminopropanoate deaminase (Mus musculus (Mouse)).